The chain runs to 1035 residues: Cell-division control histidine kinase PdhS (1035 aa).

The important for polar localization stretch occupies residues 1 to 613; that stretch reads MSGSYPFIDI…HADGSEEPVD (613 aa). The tract at residues 500–533 is disordered; sequence QGLANTRAESETPVSETSSIEPVEPTPPVKTRSE. Residues 614 to 1035 form an interaction with DivK region; sequence AHLNAIAWRG…VFPPTRVLAD (422 aa). The region spanning 659-730 is the PAS domain; sequence HVEELKTILD…YLHGLSGNGV (72 aa). The Histidine kinase domain maps to 802–1031; it reads RISHEIRTPL…VVEIVFPPTR (230 aa). His805 is subject to Phosphohistidine; by autocatalysis.

As to quaternary structure, interacts with DivK.

It is found in the cytoplasm. The enzyme catalyses ATP + protein L-histidine = ADP + protein N-phospho-L-histidine.. In terms of biological role, functions as a polar differentiation marker. Essential protein that, by localizing in the old pole of dividing cells, controls cell division and maturation, probably through control of DivK phosphorylation status and cellular distribution, which in turn regulates CtrA, a transcriptional regulator of the minB operon. The asymmetrical localization of this protein is probably required for cells to enter a new division cycle. This Brucella abortus (strain S19) protein is Cell-division control histidine kinase PdhS (pdhS).